A 175-amino-acid chain; its full sequence is Large ribosomal subunit protein uL6 (175 aa).

It belongs to the universal ribosomal protein uL6 family. Part of the 50S ribosomal subunit.

Functionally, this protein binds to the 23S rRNA, and is important in its secondary structure. It is located near the subunit interface in the base of the L7/L12 stalk, and near the tRNA binding site of the peptidyltransferase center. This Xylella fastidiosa (strain M23) protein is Large ribosomal subunit protein uL6.